Consider the following 224-residue polypeptide: Cysteine-rich hydrophobic domain-containing protein 1 (224 aa).

A disordered region spans residues 1–80 (MSILLPNMAE…PPPRVVSEEH (80 aa)). Positions 13–25 (TISELEEEEEEEA) are enriched in acidic residues. A compositionally biased stretch (low complexity) spans 26-40 (ATSSSSPSSSSSVSG). Over residues 41 to 69 (PDDDEEDEEEEEEEEEEEEEEEEEEEEEA) the composition is skewed to acidic residues. A coiled-coil region spans residues 42–70 (DDDEEDEEEEEEEEEEEEEEEEEEEEEAP).

The protein belongs to the CHIC family. In terms of processing, palmitoylated. As to expression, equally expressed in various parts of the brain.

It localises to the cell membrane. The protein resides in the cytoplasmic vesicle. The protein is Cysteine-rich hydrophobic domain-containing protein 1 (CHIC1) of Homo sapiens (Human).